Here is a 325-residue protein sequence, read N- to C-terminus: Glutarate 2-hydroxylase (325 aa).

Fe cation is bound by residues His-160, Asp-162, and His-292.

It belongs to the glutarate hydroxylase family. As to quaternary structure, homotetramer. It depends on Fe(2+) as a cofactor.

It carries out the reaction glutarate + 2-oxoglutarate + O2 = (S)-2-hydroxyglutarate + succinate + CO2. It participates in amino-acid degradation. Acts as an alpha-ketoglutarate-dependent dioxygenase catalyzing hydroxylation of glutarate (GA) to L-2-hydroxyglutarate (L2HG). Functions in a L-lysine degradation pathway that proceeds via cadaverine, glutarate and L-2-hydroxyglutarate. The sequence is that of Glutarate 2-hydroxylase from Escherichia coli (strain UTI89 / UPEC).